A 180-amino-acid polypeptide reads, in one-letter code: Dynactin subunit 6 (180 aa).

Belongs to the dynactin subunits 5/6 family. Dynactin subunit 6 subfamily. In terms of assembly, subunit of dynactin, a multiprotein complex part of a tripartite complex with dynein and a adapter, such as BICDL1, BICD2 or HOOK3. The dynactin complex is built around ACTR1A/ACTB filament and consists of an actin-related filament composed of a shoulder domain, a pointed end and a barbed end.

It is found in the cytoplasm. The protein localises to the cytoskeleton. Its function is as follows. Part of the dynactin complex that activates the molecular motor dynein for ultra-processive transport along microtubules. This Caenorhabditis elegans protein is Dynactin subunit 6 (dnc-6).